A 474-amino-acid chain; its full sequence is 3-isopropylmalate dehydratase large subunit (474 aa).

Residues Gly293–Pro313 form a disordered region. The [4Fe-4S] cluster site is built by Cys348, Cys408, and Cys411.

The protein belongs to the aconitase/IPM isomerase family. LeuC type 1 subfamily. Heterodimer of LeuC and LeuD. It depends on [4Fe-4S] cluster as a cofactor.

The catalysed reaction is (2R,3S)-3-isopropylmalate = (2S)-2-isopropylmalate. It participates in amino-acid biosynthesis; L-leucine biosynthesis; L-leucine from 3-methyl-2-oxobutanoate: step 2/4. Functionally, catalyzes the isomerization between 2-isopropylmalate and 3-isopropylmalate, via the formation of 2-isopropylmaleate. The sequence is that of 3-isopropylmalate dehydratase large subunit from Natronomonas pharaonis (strain ATCC 35678 / DSM 2160 / CIP 103997 / JCM 8858 / NBRC 14720 / NCIMB 2260 / Gabara) (Halobacterium pharaonis).